The sequence spans 471 residues: Retinoic acid receptor RXR-beta-A (471 aa).

Positions 1–34 are disordered; sequence MGDSRDSRSPDSSSVSSPPSGQRSPPLAPSAAAM. The segment at 1 to 102 is modulating; sequence MGDSRDSRSP…HAVSSSDDVK (102 aa). A compositionally biased stretch (low complexity) spans 10–25; sequence PDSSSVSSPPSGQRSP. The nuclear receptor DNA-binding region spans 122-197; it reads KRLCAICGDR…MGMKREVVQD (76 aa). NR C4-type zinc fingers lie at residues 125–145 and 161–185; these read CAICGDRSSGKHYGVYSCEGC and CRDNKDCLVDKRQRNRCQYCRYQKC. Positions 196 to 216 are enriched in basic and acidic residues; sequence QDERQRSVQEERQRNKERDGE. The disordered stretch occupies residues 196-226; that stretch reads QDERQRSVQEERQRNKERDGEVESSSAANEE. The interval 198–221 is hinge; the sequence is ERQRSVQEERQRNKERDGEVESSS. Residues 224–467 form the NR LBD domain; that stretch reads NEEMPVEKIL…TFLMEMLEAP (244 aa).

Belongs to the nuclear hormone receptor family. NR2 subfamily. In terms of assembly, homodimer. Heterodimer; with a rar molecule. Binds DNA preferentially as a rar/rxr heterodimer. Heterodimerizes with rarga. In terms of tissue distribution, shows uniform expression from the blastula to mid-gastrula stages. At 12 hours post-fertilization (hpf), expressed ubiquitously but more weakly. At 24 hpf, restricted to the ventral diencephalon, pharangeal endoderm and trunk and tail mesoderm; mesoderm expression is in medial cells of each somite along the dorsoventral axis, forming stripes. At 48 hpf, expressed in forebrain, eye, midbrain and anterior hindbrain.

The protein resides in the nucleus. Receptor for retinoic acid. Retinoic acid receptors bind as heterodimers to their target response elements in response to their ligands, all-trans or 9-cis retinoic acid, and regulate gene expression in various biological processes. The rar/rxr heterodimers bind to the retinoic acid response elements (RARE) composed of tandem 5'-AGGTCA-3' sites known as DR1-DR5. The high affinity ligand for rxrs is 9-cis retinoic acid. The protein is Retinoic acid receptor RXR-beta-A (rxrba) of Danio rerio (Zebrafish).